A 633-amino-acid chain; its full sequence is Pesticidal crystal protein Cry2Ad (633 aa).

It belongs to the delta endotoxin family.

Promotes colloidosmotic lysis by binding to the midgut epithelial cells of insects. In Bacillus thuringiensis, this protein is Pesticidal crystal protein Cry2Ad (cry2Ad).